Reading from the N-terminus, the 329-residue chain is tRNA(Ile)-lysidine synthase (329 aa).

Serine 37–serine 42 is a binding site for ATP.

It belongs to the tRNA(Ile)-lysidine synthase family.

Its subcellular location is the cytoplasm. The catalysed reaction is cytidine(34) in tRNA(Ile2) + L-lysine + ATP = lysidine(34) in tRNA(Ile2) + AMP + diphosphate + H(+). Its function is as follows. Ligates lysine onto the cytidine present at position 34 of the AUA codon-specific tRNA(Ile) that contains the anticodon CAU, in an ATP-dependent manner. Cytidine is converted to lysidine, thus changing the amino acid specificity of the tRNA from methionine to isoleucine. The protein is tRNA(Ile)-lysidine synthase of Zymomonas mobilis subsp. mobilis (strain ATCC 31821 / ZM4 / CP4).